The sequence spans 401 residues: Phosphoglycerate kinase (401 aa).

Substrate-binding positions include aspartate 24–asparagine 26, arginine 40, histidine 63–arginine 66, arginine 122, and arginine 155. ATP-binding positions include lysine 206, glycine 297, glutamate 328, and glycine 357–serine 360.

Belongs to the phosphoglycerate kinase family. As to quaternary structure, monomer.

The protein localises to the cytoplasm. The enzyme catalyses (2R)-3-phosphoglycerate + ATP = (2R)-3-phospho-glyceroyl phosphate + ADP. It participates in carbohydrate degradation; glycolysis; pyruvate from D-glyceraldehyde 3-phosphate: step 2/5. This is Phosphoglycerate kinase from Synechococcus sp. (strain CC9605).